A 553-amino-acid polypeptide reads, in one-letter code: CTP synthase (553 aa).

Residues Met1 to Leu270 are amidoligase domain. Position 13 (Ser13) interacts with CTP. Ser13 lines the UTP pocket. ATP is bound by residues Ser14 to Ile19 and Asp71. Mg(2+) contacts are provided by Asp71 and Glu144. Residues Asp151–Glu153, Lys191–Gln196, and Lys227 each bind CTP. UTP contacts are provided by residues Lys191 to Gln196 and Lys227. Positions Thr295 to Ala547 constitute a Glutamine amidotransferase type-1 domain. Gly356 contributes to the L-glutamine binding site. Catalysis depends on Cys383, which acts as the Nucleophile; for glutamine hydrolysis. Residues Leu384–Gln387, Glu407, and Arg473 contribute to the L-glutamine site. Catalysis depends on residues His520 and Glu522.

This sequence belongs to the CTP synthase family. As to quaternary structure, homotetramer.

It carries out the reaction UTP + L-glutamine + ATP + H2O = CTP + L-glutamate + ADP + phosphate + 2 H(+). It catalyses the reaction L-glutamine + H2O = L-glutamate + NH4(+). The enzyme catalyses UTP + NH4(+) + ATP = CTP + ADP + phosphate + 2 H(+). It functions in the pathway pyrimidine metabolism; CTP biosynthesis via de novo pathway; CTP from UDP: step 2/2. Its activity is regulated as follows. Allosterically activated by GTP, when glutamine is the substrate; GTP has no effect on the reaction when ammonia is the substrate. The allosteric effector GTP functions by stabilizing the protein conformation that binds the tetrahedral intermediate(s) formed during glutamine hydrolysis. Inhibited by the product CTP, via allosteric rather than competitive inhibition. Functionally, catalyzes the ATP-dependent amination of UTP to CTP with either L-glutamine or ammonia as the source of nitrogen. Regulates intracellular CTP levels through interactions with the four ribonucleotide triphosphates. This is CTP synthase from Paraburkholderia phymatum (strain DSM 17167 / CIP 108236 / LMG 21445 / STM815) (Burkholderia phymatum).